Reading from the N-terminus, the 255-residue chain is MPRYALRIEYDGGPFAGWQRQAAQASVQGAIETALGRLEPGPHTIAAAGRTDTGVHASGQVAHCDLVREWDPFRLAGALNAHLKPLPVAIVAAARVPEEFHARFSAVERRYLFRLLARRAPEVHDRGRVWRVPHPLDPEAMRAGAAHLVGRHDFTTFRAAGCQAASPVKTLDALTLETVEGMNGTEYRFHLRARSFLHNQVRSIVGTLERVGAGAWTPDQVREALDARDRAACGPVSPPQGLYLTGVGYPADPFA.

The active-site Nucleophile is D52. A substrate-binding site is contributed by Y111.

This sequence belongs to the tRNA pseudouridine synthase TruA family. In terms of assembly, homodimer.

It carries out the reaction uridine(38/39/40) in tRNA = pseudouridine(38/39/40) in tRNA. In terms of biological role, formation of pseudouridine at positions 38, 39 and 40 in the anticodon stem and loop of transfer RNAs. The chain is tRNA pseudouridine synthase A from Cereibacter sphaeroides (strain ATCC 17023 / DSM 158 / JCM 6121 / CCUG 31486 / LMG 2827 / NBRC 12203 / NCIMB 8253 / ATH 2.4.1.) (Rhodobacter sphaeroides).